Reading from the N-terminus, the 498-residue chain is ATP synthase subunit beta, chloroplastic (498 aa).

172–179 (GGAGVGKT) is an ATP binding site.

The protein belongs to the ATPase alpha/beta chains family. F-type ATPases have 2 components, CF(1) - the catalytic core - and CF(0) - the membrane proton channel. CF(1) has five subunits: alpha(3), beta(3), gamma(1), delta(1), epsilon(1). CF(0) has four main subunits: a(1), b(1), b'(1) and c(9-12).

The protein resides in the plastid. The protein localises to the chloroplast thylakoid membrane. The catalysed reaction is ATP + H2O + 4 H(+)(in) = ADP + phosphate + 5 H(+)(out). In terms of biological role, produces ATP from ADP in the presence of a proton gradient across the membrane. The catalytic sites are hosted primarily by the beta subunits. The chain is ATP synthase subunit beta, chloroplastic from Phormium tenax (New Zealand flax).